The following is a 562-amino-acid chain: MASWRCLELARGVGTSILFREAAALGSLKWKRTATAAGASQITNCLHSVASNSKREPRPVKTRVMTQERGSGETQTTADKYEAVIGIETHVQLGTSTKAFCSCPSEYGSEPNANVCPVCMGLPGALPVLNAAVVESGVKLGLALQANIALKSKFDRKQYFYPDLPKGYQISQFDIPIAEKGYIDVDLPVEFGGGHRRFGVTRVHMEEDAGKLIHAGNDRLSGSSSSQVDLNRAGVPLLEVVSEPEMRTGLEAAEYAAELQRMVRYLGISNGNMQEGSMRCDVNISIRPKGREQFGTKVEIKNMNSFSAMQKAIEFEMDRQIALLEEGERIKQETRLWEEGSQQTISMRSKEGLADYRYFPEPDLPEVVLSQEYIDTTRANLPELPDAKRRRYESLGLSMQDTLVLANDSDVAAFFDEVLEKGTEVKQAANWIMGDVAAHLKSIKLTITEAKLTPASLAELIGLIKDGTISGKIAKEILPELIEKGGSAKGAVESKGLSQISDPAVIESMVDKILADNVKQVEAYRGGKTKLQGFFVGQAMKASGGRVNPGLLNKILMAKLNG.

The segment at 48–76 is disordered; it reads SVASNSKREPRPVKTRVMTQERGSGETQT. Over residues 64-76 the composition is skewed to polar residues; it reads VMTQERGSGETQT.

Belongs to the GatB/GatE family. GatB subfamily. In terms of assembly, subunit of the heterotrimeric GatCAB amidotransferase (AdT) complex, composed of A, B and C subunits.

The protein resides in the mitochondrion. It is found in the plastid. The protein localises to the chloroplast. The enzyme catalyses L-glutamyl-tRNA(Gln) + L-glutamine + ATP + H2O = L-glutaminyl-tRNA(Gln) + L-glutamate + ADP + phosphate + H(+). In terms of biological role, allows the formation of correctly charged Gln-tRNA(Gln) through the transamidation of misacylated Glu-tRNA(Gln) in chloroplasts and mitochondria. The reaction takes place in the presence of glutamine and ATP through an activated gamma-phospho-Glu-tRNA(Gln). The protein is Glutamyl-tRNA(Gln) amidotransferase subunit B, chloroplastic/mitochondrial of Physcomitrium patens (Spreading-leaved earth moss).